The following is a 1713-amino-acid chain: Serine/threonine-protein kinase MRCK beta (1713 aa).

The 267-residue stretch at 76 to 342 (FEIIKVIGRG…IEDFKKHAFF (267 aa)) folds into the Protein kinase domain. Residues 82–90 (IGRGAFGEV) and lysine 105 each bind ATP. Residue aspartate 200 is the Proton acceptor of the active site. Residues serine 221 and serine 233 each carry the phosphoserine; by autocatalysis modification. Threonine 239 carries the phosphothreonine; by autocatalysis modification. The AGC-kinase C-terminal domain maps to 343 to 413 (EGLNWENIRN…TTESCFSDRG (71 aa)). At threonine 423 the chain carries Phosphothreonine. The stretch at 434 to 649 (LENSLQIEAY…ASKERKLREH (216 aa)) forms a coiled coil. The interval 461 to 485 (LQESTQTVQSLHGSTRALGNSNRDK) is disordered. Polar residues predominate over residues 463 to 481 (ESTQTVQSLHGSTRALGNS). Arginine 671 is modified (omega-N-methylarginine). 2 coiled-coil regions span residues 681–815 (QEIS…AHWE) and 882–939 (ALEA…FRAD). Serine 927 carries the post-translational modification Phosphoserine. At tyrosine 954 the chain carries Phosphotyrosine. Polar residues-rich tracts occupy residues 971-994 (ASDQETQASKLDLSPSVSVATSTE) and 1001-1014 (RSQQRPSTVPLPNT). The tract at residues 971–1014 (ASDQETQASKLDLSPSVSVATSTEQQEDAARSQQRPSTVPLPNT) is disordered. The segment at 1026–1076 (AHQFSIKSFPSPTQCSHCTSLMVGLIRQGYACEVCAFSCHVSCKDSAPQVC) adopts a Phorbol-ester/DAG-type zinc-finger fold. Residues 1096-1215 (GTAYKGYVKV…WVGILEGLQA (120 aa)) form the PH domain. The 275-residue stretch at 1241–1515 (IKTVLAAAIV…RPLNSDGSLN (275 aa)) folds into the CNH domain. A CRIB domain is found at 1585–1598 (ISNPTNFNHVAHMG). Positions 1615–1713 (PTAQEEKQGP…EGLDQPACDA (99 aa)) are disordered. Over residues 1666-1677 (DFDKEPDSDSTK) the composition is skewed to basic and acidic residues. Residues serine 1682, serine 1684, serine 1688, serine 1692, and serine 1695 each carry the phosphoserine modification.

Belongs to the protein kinase superfamily. AGC Ser/Thr protein kinase family. DMPK subfamily. Homodimer and homotetramer via the coiled coil regions. Interacts tightly with GTP-bound but not GDP-bound CDC42. Interacts with TJP1; this interaction requires the presence of catalytically active CDC42. Forms a tripartite complex with MYO18A and LURAP1 with the latter acting as an adapter connecting CDC42BPB and MYO18A. LURAP1 binding results in activation of CDC42BPB by abolition of its negative autoregulation. Interacts with STRIP1, STRN3 and SIKE1. Interacts with CPNE4 (via VWFA domain). Interacts with LURAP1. Interacts (via AGC-kinase C-terminal domain) with FAM89B/LRAP25 (via LRR repeat). Forms a tripartite complex with FAM89B/LRAP25 and LIMK1. Mg(2+) is required as a cofactor. Proteolytically cleaved by caspases upon apoptosis induction. In terms of tissue distribution, expressed in all tissues examined with highest levels in lung and kidney.

The protein localises to the cytoplasm. It is found in the cell membrane. Its subcellular location is the cell junction. It localises to the cell projection. The protein resides in the lamellipodium. The enzyme catalyses L-seryl-[protein] + ATP = O-phospho-L-seryl-[protein] + ADP + H(+). It catalyses the reaction L-threonyl-[protein] + ATP = O-phospho-L-threonyl-[protein] + ADP + H(+). Its activity is regulated as follows. Maintained in an inactive, closed conformation by an interaction between the kinase domain and the negative autoregulatory C-terminal coiled-coil region. Agonist binding to the phorbol ester binding site disrupts this, releasing the kinase domain to allow N-terminus-mediated dimerization and kinase activation by transautophosphorylation. Inhibited by chelerythrine chloride. Serine/threonine-protein kinase which is an important downstream effector of CDC42 and plays a role in the regulation of cytoskeleton reorganization and cell migration. Regulates actin cytoskeletal reorganization via phosphorylation of PPP1R12C and MYL9/MLC2. In concert with MYO18A and LURAP1, is involved in modulating lamellar actomyosin retrograde flow that is crucial to cell protrusion and migration. Phosphorylates PPP1R12A. In concert with FAM89B/LRAP25 mediates the targeting of LIMK1 to the lamellipodium resulting in its activation and subsequent phosphorylation of CFL1 which is important for lamellipodial F-actin regulation. This Rattus norvegicus (Rat) protein is Serine/threonine-protein kinase MRCK beta.